The following is a 531-amino-acid chain: O-phosphoserine--tRNA(Cys) ligase (531 aa).

Residues 189 to 191 (HMT), 234 to 236 (SAS), 276 to 277 (YY), and N319 contribute to the substrate site.

It belongs to the class-II aminoacyl-tRNA synthetase family. O-phosphoseryl-tRNA(Cys) synthetase subfamily. As to quaternary structure, homotetramer. Interacts with SepCysS.

The catalysed reaction is tRNA(Cys) + O-phospho-L-serine + ATP = O-phospho-L-seryl-tRNA(Cys) + AMP + diphosphate. Catalyzes the attachment of O-phosphoserine (Sep) to tRNA(Cys). In Methanoculleus marisnigri (strain ATCC 35101 / DSM 1498 / JR1), this protein is O-phosphoserine--tRNA(Cys) ligase.